The sequence spans 199 residues: MSSGNAYIGKLAPDFQATAVMPDGQFKEIKLSDYKGKYVVLFFYPLDFTFVCPTEIIAFSDRSEEFRKINCEVIGASVDSHFCHLAWINTPKKQGGLGSMHIPLVSDTKRVIAKDYGILKEDEGISYRGLFIIDDKGTLRQITINDLPVGRSVDETLRLVQAFQFTDKHGEVCPAGWQPGSDTIKPDVQKSKEYFSKHK.

The 160-residue stretch at Ala-6–Phe-165 folds into the Thioredoxin domain. Catalysis depends on Cys-52, which acts as the Cysteine sulfenic acid (-SOH) intermediate.

Belongs to the peroxiredoxin family. AhpC/Prx1 subfamily. In terms of assembly, homodimer; disulfide-linked, upon oxidation. 5 homodimers assemble to form a ring-like decamer. Interacts with GDPD5; forms a mixed-disulfide with GDPD5. Interacts with SESN1 and SESN2. Interacts with FAM107A. Post-translationally, the enzyme can be inactivated by further oxidation of the cysteine sulfenic acid (C(P)-SOH) to sulphinic acid (C(P)-SO2H) instead of its condensation to a disulfide bond. It can be reactivated by forming a transient disulfide bond with sulfiredoxin SRXN1, which reduces the cysteine sulfinic acid in an ATP- and Mg-dependent manner.

It is found in the cytoplasm. The enzyme catalyses a hydroperoxide + [thioredoxin]-dithiol = an alcohol + [thioredoxin]-disulfide + H2O. Functionally, thiol-specific peroxidase that catalyzes the reduction of hydrogen peroxide and organic hydroperoxides to water and alcohols, respectively. Plays a role in cell protection against oxidative stress by detoxifying peroxides and as sensor of hydrogen peroxide-mediated signaling events. Might participate in the signaling cascades of growth factors and tumor necrosis factor-alpha by regulating the intracellular concentrations of H(2)O(2). Reduces an intramolecular disulfide bond in GDPD5 that gates the ability to GDPD5 to drive postmitotic motor neuron differentiation. The protein is Peroxiredoxin-1 (PRDX1) of Gekko japonicus (Schlegel's Japanese gecko).